Here is a 510-residue protein sequence, read N- to C-terminus: MMSMFDGLFADLKQARESFEPALSPREIGKITSVATGIAKVSGLPNVGYDELLLFPGDIYGIAFNVDEDEIGVVLLGEYWHLQAGDEVERLGHVVDVPVGDSLIGRIINPIGKPLDGKGNLGTTERLPIERPSPAIMDRAGVSVPLQTGIKVIDALIPVGRGQRELILGDRQTGKTAIAMDTILNQRGKNVLCVYCAIGQRASGVAKVIATLREQGAMEYTVVVVTEGNEPPGLAYVAPYAATSIAEYFMEQGRDVLIVYDDLTHHARAYRELSLLLRRPPGREAFPGDIFYIHSRLLERATHLSKELGGGSLTALPIIETEAQDISAYIPTNLISITDGQIYLSPALFELGILPAVDVGKSVSRVGGKAQRAAYRGVTVDLKLAYAQFEELETFARFGARLDDDTLKIIEHGRRIRACLKQPEFAPVSMAEQIAVLVALTADLFDDINLDNMPAAEQAVRDAAANITDDIVERLESTDKLSKDDKAVILELARQALETFSTDTDLGEPR.

An ATP-binding site is contributed by 169–176 (GDRQTGKT).

It belongs to the ATPase alpha/beta chains family. As to quaternary structure, F-type ATPases have 2 components, CF(1) - the catalytic core - and CF(0) - the membrane proton channel. CF(1) has five subunits: alpha(3), beta(3), gamma(1), delta(1), epsilon(1). CF(0) has three main subunits: a(1), b(2) and c(9-12). The alpha and beta chains form an alternating ring which encloses part of the gamma chain. CF(1) is attached to CF(0) by a central stalk formed by the gamma and epsilon chains, while a peripheral stalk is formed by the delta and b chains.

It is found in the cell inner membrane. It carries out the reaction ATP + H2O + 4 H(+)(in) = ADP + phosphate + 5 H(+)(out). Its function is as follows. Produces ATP from ADP in the presence of a proton gradient across the membrane. The alpha chain is a regulatory subunit. This chain is ATP synthase subunit alpha 1, found in Marinomonas sp. (strain MWYL1).